A 514-amino-acid polypeptide reads, in one-letter code: Cytochrome P450 94A1 (514 aa).

A helical transmembrane segment spans residues 7–29; that stretch reads EVLLPYLLPLLLLILPTTIFFLT. C458 contacts heme.

The protein belongs to the cytochrome P450 family. Heme is required as a cofactor.

The protein resides in the endoplasmic reticulum membrane. Functionally, catalyzes the omega-hydroxylation of various fatty acids (FA) from 10 to 18 carbon atoms. The substrate specificity is higher for laurate &gt; palmitate &gt; myristate &gt; linolenate &gt; linoleate &gt; oleate &gt; caprate. May play a minor role in cutin synthesis and could be involved in plant defense. The chain is Cytochrome P450 94A1 (CYP94A1) from Vicia sativa (Spring vetch).